Consider the following 358-residue polypeptide: Peptide chain release factor 1 (358 aa).

Gln233 carries the post-translational modification N5-methylglutamine.

This sequence belongs to the prokaryotic/mitochondrial release factor family. Post-translationally, methylated by PrmC. Methylation increases the termination efficiency of RF1.

It localises to the cytoplasm. Functionally, peptide chain release factor 1 directs the termination of translation in response to the peptide chain termination codons UAG and UAA. This is Peptide chain release factor 1 from Listeria monocytogenes serotype 4b (strain CLIP80459).